The following is a 1100-amino-acid chain: MLERIQQLVNAVNDPRSDVATKRQAIELLNGIKSSENALEIFISLVINENSNDLLKFYGLSTLIELMTEGVNANPNGLNLVKFEITKWLKFQVLGNKQTKLPDFLMNKISEVLTTLFMLMYSDCNGNQWNSFFDDLMSLFQVDSAISNTSPSTDGNILLGLEFFNKLCLMINSEIADQSFIRSKESQLKNNNIKDWMRDNDIMKLSNVWFQCLKLDEQIVSQCPGLINSTLDCIGSFISWIDINLIIDANNYYLQLIYKFLNLKETKISCYNCILAIISKKMKPMDKLAFLNMINLTNELTYYHQAISMNPQIITFDNLEVWESLTKLITSFGIEFTIIIEQVNDDQKLDTLYKQSVISNVDSILLEKIIPILLEFMNNEFDSITAKTFPFWSNYLAFLKKYKASSPNFVPLHKDFLDNFQQICFKRMKFSDDEVTQDDFEEFNETVRFKLKNFQEIIVVIDPSLFLNNISQEISANLMNCKNESWQVFELTIYQIFNLSECIKNNYFGLNKNEIMTSQPSLTLVRFLNELLMMKDFLLAIDNEQIQILFMELIVKNYNFIFSTSANTANATDDDEKYLLILNIFMSSFAMFNKRENVRLRSWYLFTRFLKLTRINLKKILFANKNLVNEITNKISPLLHIKVTSINAQGTDDNDTIFDNQLYIFEGIGFIITLNNSSQELTAATANTPIDYDILDQILTPLFTQLEGCITQGASPVVILECHHILMAIGTLARGLHIGLVPENQVNNMVVNKKLINDSLIHKFSNIAEVILVTFSFFNKFENIRDASRFTFARLIPILSNKILPFINKLIELILSSTDLKSWEMIDFLGFLSQLIHMFHTDTDCYQLFNQLLTPLINKIHSIIEEIDEQHDQQSSSNKPIDTAVTATSVNKNIVVTDSYRDKILLKKAYCTFLQSFTNNSVTSILLSDINRAILPVILNDLVTYTPQEIQETSMMKVSLNVLCNFIKCFGNGTCLDNDDINKDPNLKIDGLNEYFIMKCVPIIFEIPFNPIYKFNIKEGSFKTMAYDLARLLRELFIVSSNPTTNENECVKYLTQIYLPQIQLPQELTIQLVNMLTTMGQKQFEKWFVDNFISVLKQGQ.

This sequence belongs to the exportin family. Interacts with GSP1, GSP2, NSP1, NUP2 and UTP8.

It localises to the nucleus. Its subcellular location is the cytoplasm. Its function is as follows. tRNA nucleus export receptor which facilitates tRNA translocation across the nuclear pore complex. Preferentially interacts with tRNAs with mature 5'- and 3'-termini and does not distinguish between intron-containing and spliced tRNAs. In the nucleus binds to tRNA and to the Ran-GTPases GSP1 or GSP2 in their active GTP-bound form. Docking of this trimeric complex to the nuclear pore complex (NPC) is mediated through binding to nucleoporins. Upon transit of a nuclear export complex into the cytoplasm, disassembling of the complex and hydrolysis of Ran-GTP to Ran-GDP cause release of the tRNA from the export receptor. The directionality of nuclear export is thought to be conferred by an asymmetric distribution of the GTP- and GDP-bound forms of Ran between the cytoplasm and nucleus. Involved in pre-tRNA splicing, probably by affecting the interaction of pre-tRNA with splicing endonuclease. The protein is Exportin-T (LOS1) of Saccharomyces cerevisiae (strain YJM789) (Baker's yeast).